We begin with the raw amino-acid sequence, 255 residues long: Pyrroloquinoline-quinone synthase (255 aa).

Belongs to the PqqC family.

The enzyme catalyses 6-(2-amino-2-carboxyethyl)-7,8-dioxo-1,2,3,4,7,8-hexahydroquinoline-2,4-dicarboxylate + 3 O2 = pyrroloquinoline quinone + 2 H2O2 + 2 H2O + H(+). It functions in the pathway cofactor biosynthesis; pyrroloquinoline quinone biosynthesis. Functionally, ring cyclization and eight-electron oxidation of 3a-(2-amino-2-carboxyethyl)-4,5-dioxo-4,5,6,7,8,9-hexahydroquinoline-7,9-dicarboxylic-acid to PQQ. This Cereibacter sphaeroides (strain ATCC 17029 / ATH 2.4.9) (Rhodobacter sphaeroides) protein is Pyrroloquinoline-quinone synthase.